Consider the following 359-residue polypeptide: Protein mab-21-like 2 (359 aa).

This sequence belongs to the mab-21 family.

The protein localises to the nucleus. It localises to the cytoplasm. Functionally, required for eye morphogenesis. May promote the survival of proliferating retinal progenitor cells. The chain is Protein mab-21-like 2 (mab21l2) from Danio rerio (Zebrafish).